A 333-amino-acid polypeptide reads, in one-letter code: Glycerol-3-phosphate dehydrogenase [NAD(P)+] (333 aa).

NADPH-binding residues include tryptophan 11, arginine 34, and lysine 107. 3 residues coordinate sn-glycerol 3-phosphate: lysine 107, glycine 136, and serine 138. Alanine 140 contacts NADPH. Positions 191, 244, 254, 255, and 256 each coordinate sn-glycerol 3-phosphate. Lysine 191 (proton acceptor) is an active-site residue. Arginine 255 serves as a coordination point for NADPH. Residues isoleucine 279 and glutamate 281 each contribute to the NADPH site.

This sequence belongs to the NAD-dependent glycerol-3-phosphate dehydrogenase family.

It is found in the cytoplasm. The enzyme catalyses sn-glycerol 3-phosphate + NAD(+) = dihydroxyacetone phosphate + NADH + H(+). The catalysed reaction is sn-glycerol 3-phosphate + NADP(+) = dihydroxyacetone phosphate + NADPH + H(+). It participates in membrane lipid metabolism; glycerophospholipid metabolism. Catalyzes the reduction of the glycolytic intermediate dihydroxyacetone phosphate (DHAP) to sn-glycerol 3-phosphate (G3P), the key precursor for phospholipid synthesis. In Nitrosospira multiformis (strain ATCC 25196 / NCIMB 11849 / C 71), this protein is Glycerol-3-phosphate dehydrogenase [NAD(P)+].